We begin with the raw amino-acid sequence, 706 residues long: 1,4-alpha-glucan-branching enzyme (706 aa).

(1,4-alpha-D-glucosyl)n is bound by residues tryptophan 96 and lysine 133. Residue aspartate 358 is the Nucleophile of the active site. Residue glutamate 419 is the Proton donor of the active site.

It belongs to the glycosyl hydrolase 13 family. GlgB subfamily. In terms of assembly, monomer.

Its subcellular location is the cytoplasm. The catalysed reaction is Transfers a segment of a (1-&gt;4)-alpha-D-glucan chain to a primary hydroxy group in a similar glucan chain.. Its pathway is glycan biosynthesis; glycogen biosynthesis. In terms of biological role, glycogen-branching enzyme participates in the glycogen biosynthetic process along with glycogenin and glycogen synthase. Generates alpha-1,6-glucosidic branches from alpha-1,4-linked glucose chains, to increase solubility of the glycogen polymer. In Candida glabrata (strain ATCC 2001 / BCRC 20586 / JCM 3761 / NBRC 0622 / NRRL Y-65 / CBS 138) (Yeast), this protein is 1,4-alpha-glucan-branching enzyme (GLC3).